The sequence spans 197 residues: Imidazoleglycerol-phosphate dehydratase (197 aa).

This sequence belongs to the imidazoleglycerol-phosphate dehydratase family.

The protein localises to the cytoplasm. It catalyses the reaction D-erythro-1-(imidazol-4-yl)glycerol 3-phosphate = 3-(imidazol-4-yl)-2-oxopropyl phosphate + H2O. Its pathway is amino-acid biosynthesis; L-histidine biosynthesis; L-histidine from 5-phospho-alpha-D-ribose 1-diphosphate: step 6/9. The protein is Imidazoleglycerol-phosphate dehydratase of Thioalkalivibrio sulfidiphilus (strain HL-EbGR7).